The sequence spans 576 residues: Proton pump-interactor 3B (576 aa).

The segment at 34 to 63 (SEVTTDEEEDTIFSGGDSSSGLAAEEDSSG) is disordered. Coiled coils occupy residues 132-155 (RMVI…LRCT) and 205-241 (EKEA…SDKL). Basic and acidic residues predominate over residues 369 to 381 (RSEKVHKMNREDS). The interval 369–395 (RSEKVHKMNREDSSSNSSEDGNVITDK) is disordered. Residues 411-467 (KKKEEEIDEEALKERKREEQLEKARLVMERKRKLQEKAAAKAAIRAQKEAEKKLKAI) are a coiled coil. The helical transmembrane segment at 555–575 (WVWGLSSAALAVSLVLVVLLL) threads the bilayer.

This sequence belongs to the plant Proton pump-interactor protein family.

It localises to the cell membrane. Its subcellular location is the endoplasmic reticulum membrane. Functionally, may regulate plasma membrane ATPase activity. The sequence is that of Proton pump-interactor 3B (PPI3B) from Arabidopsis thaliana (Mouse-ear cress).